Here is a 317-residue protein sequence, read N- to C-terminus: Melanocyte-stimulating hormone receptor (317 aa).

Topologically, residues 1-37 (MSVQGPQRRLLGSVNSTSPAAPRLGLAANQTGPRCLE) are extracellular. Residues Asn-15 and Asn-29 are each glycosylated (N-linked (GlcNAc...) asparagine). A helical transmembrane segment spans residues 38–63 (VSVPDGLFLSLGLVSVVENVLVVAAI). At 64–72 (AKNRNLHSP) the chain is on the cytoplasmic side. A helical transmembrane segment spans residues 73-93 (MYYFICCLAVSDLLVSVSSVL). The Extracellular portion of the chain corresponds to 94–118 (ETAVMLLLEAGTLAGRAAVVQQLDD). The chain crosses the membrane as a helical span at residues 119–140 (IIDVLVCGAMVSSLCFLGAIAV). Over 141–163 (DRYISIFYALRYHSIVTLPRAWR) the chain is Cytoplasmic. The helical transmembrane segment at 164-183 (AISAIWVASVLSSTLFIAYY) threads the bilayer. The Extracellular portion of the chain corresponds to 184–191 (DHTAVLLC). Residues 192–211 (LVSFFVAMLVLMAVLYVHML) form a helical membrane-spanning segment. Topologically, residues 212-240 (ARACQHARGIARLHKRQRPVHQGLGLKGA) are cytoplasmic. A helical membrane pass occupies residues 241–266 (ATLTILLGIFFLCWGPFFLHLSLMVL). Over 267 to 279 (CPRHPICGCVFKN) the chain is Extracellular. Residues 280-300 (FNLFLTLIICNSIVDPLIYAF) form a helical membrane-spanning segment. Residues 301–317 (RSQELRKTLREVLLCSW) lie on the Cytoplasmic side of the membrane. The S-palmitoyl cysteine moiety is linked to residue Cys-315.

This sequence belongs to the G-protein coupled receptor 1 family. Interacts with MGRN1, but does not undergo MGRN1-mediated ubiquitination; this interaction competes with GNAS-binding and thus inhibits agonist-induced cAMP production. Interacts with OPN3; the interaction results in a decrease in MC1R-mediated cAMP signaling and ultimately a decrease in melanin production in melanocytes.

The protein localises to the cell membrane. Its function is as follows. Receptor for MSH (alpha, beta and gamma) and ACTH. The activity of this receptor is mediated by G proteins which activate adenylate cyclase. Mediates melanogenesis, the production of eumelanin (black/brown) and phaeomelanin (red/yellow), via regulation of cAMP signaling in melanocytes. The polypeptide is Melanocyte-stimulating hormone receptor (MC1R) (Puma yagouaroundi (Jaguarundi)).